A 358-amino-acid polypeptide reads, in one-letter code: 3-isopropylmalate dehydrogenase (358 aa).

Substrate contacts are provided by arginine 92, arginine 102, arginine 130, and aspartate 224. The Mg(2+) site is built by aspartate 224, aspartate 248, and aspartate 252. Glycine 282–asparagine 294 contributes to the NAD(+) binding site.

The protein belongs to the isocitrate and isopropylmalate dehydrogenases family. LeuB type 1 subfamily. As to quaternary structure, homodimer. The cofactor is Mg(2+). Mn(2+) serves as cofactor.

The protein localises to the cytoplasm. The enzyme catalyses (2R,3S)-3-isopropylmalate + NAD(+) = 4-methyl-2-oxopentanoate + CO2 + NADH. Its pathway is amino-acid biosynthesis; L-leucine biosynthesis; L-leucine from 3-methyl-2-oxobutanoate: step 3/4. In terms of biological role, catalyzes the oxidation of 3-carboxy-2-hydroxy-4-methylpentanoate (3-isopropylmalate) to 3-carboxy-4-methyl-2-oxopentanoate. The product decarboxylates to 4-methyl-2 oxopentanoate. The polypeptide is 3-isopropylmalate dehydrogenase (Bordetella parapertussis (strain 12822 / ATCC BAA-587 / NCTC 13253)).